We begin with the raw amino-acid sequence, 264 residues long: MSNSNIHPTAVIAEGANLGKNVKIGPYCIIGAEVVLNDNVELKSHVVIEGITEIGENTIIYPFASIGQPPQILKYANERSSTIIGSNNTIREYVTVQAGSQGGGMITRIGNNNLFMVGVHVGHDCKIGNNVVFANYVSLAGHIEVGDYVIISGLSAVHQYARIGKYSMIGGLSPVGSDVIPFGLVSSKRAVLEGLNLIGMNRKGFDKAESLSALKAIKEIFSSEGNFAERIKQVAEKYKNNSIVMQIIDFLNQDSSRAFCHFEK.

It belongs to the transferase hexapeptide repeat family. LpxA subfamily. Homotrimer.

It localises to the cytoplasm. The enzyme catalyses a (3R)-hydroxyacyl-[ACP] + UDP-N-acetyl-alpha-D-glucosamine = a UDP-3-O-[(3R)-3-hydroxyacyl]-N-acetyl-alpha-D-glucosamine + holo-[ACP]. It participates in glycolipid biosynthesis; lipid IV(A) biosynthesis; lipid IV(A) from (3R)-3-hydroxytetradecanoyl-[acyl-carrier-protein] and UDP-N-acetyl-alpha-D-glucosamine: step 1/6. Functionally, involved in the biosynthesis of lipid A, a phosphorylated glycolipid that anchors the lipopolysaccharide to the outer membrane of the cell. The polypeptide is Acyl-[acyl-carrier-protein]--UDP-N-acetylglucosamine O-acyltransferase (Rickettsia canadensis (strain McKiel)).